Consider the following 145-residue polypeptide: Large ribosomal subunit protein uL15 (145 aa).

Composition is skewed to basic residues over residues 1–13 and 22–33; these read MIRK…KQRG and TKKRRGAGHRGG. A disordered region spans residues 1-41; that stretch reads MIRKTKKIRKQRGSRSVGGGCTKKRRGAGHRGGRGQAGGNK.

The protein belongs to the universal ribosomal protein uL15 family. In terms of assembly, part of the 50S ribosomal subunit.

Functionally, binds to the 23S rRNA. This Methanosphaera stadtmanae (strain ATCC 43021 / DSM 3091 / JCM 11832 / MCB-3) protein is Large ribosomal subunit protein uL15.